Consider the following 512-residue polypeptide: ATP synthase subunit alpha (512 aa).

Residue 169–176 (GDRKTGKT) coordinates ATP.

The protein belongs to the ATPase alpha/beta chains family. As to quaternary structure, F-type ATPases have 2 components, CF(1) - the catalytic core - and CF(0) - the membrane proton channel. CF(1) has five subunits: alpha(3), beta(3), gamma(1), delta(1), epsilon(1). CF(0) has three main subunits: a(1), b(2) and c(9-12). The alpha and beta chains form an alternating ring which encloses part of the gamma chain. CF(1) is attached to CF(0) by a central stalk formed by the gamma and epsilon chains, while a peripheral stalk is formed by the delta and b chains.

The protein resides in the cell membrane. The enzyme catalyses ATP + H2O + 4 H(+)(in) = ADP + phosphate + 5 H(+)(out). Its function is as follows. Produces ATP from ADP in the presence of a proton gradient across the membrane. The alpha chain is a regulatory subunit. The sequence is that of ATP synthase subunit alpha from Limosilactobacillus fermentum (strain NBRC 3956 / LMG 18251) (Lactobacillus fermentum).